The following is a 78-amino-acid chain: MVARRQTKKARKPAARRRSAAKRAAPAAKKAASRRRPKSAKKAKPAARRRSSVKPKAAKAAAQVRRRSRRIRRASVSK.

Composition is skewed to basic residues over residues 1-21, 31-57, and 64-78; these read MVAR…RSAA, AASR…KPKA, and VRRR…SVSK. The segment at 1–78 is disordered; it reads MVARRQTKKA…RRIRRASVSK (78 aa).

The protein localises to the nucleus. Its subcellular location is the chromosome. Involved in nuclear basic protein transition: histones are replaced by spermatid specific proteins which are themselves replaced by protamines in late spermatids. This is Sperm-specific protein Phi-0 from Holothuria tubulosa (Tubular sea cucumber).